A 175-amino-acid chain; its full sequence is ATP-dependent protease subunit HslV (175 aa).

Threonine 2 is a catalytic residue. 3 residues coordinate Na(+): alanine 156, cysteine 159, and threonine 162.

It belongs to the peptidase T1B family. HslV subfamily. A double ring-shaped homohexamer of HslV is capped on each side by a ring-shaped HslU homohexamer. The assembly of the HslU/HslV complex is dependent on binding of ATP.

The protein resides in the cytoplasm. The enzyme catalyses ATP-dependent cleavage of peptide bonds with broad specificity.. With respect to regulation, allosterically activated by HslU binding. Protease subunit of a proteasome-like degradation complex believed to be a general protein degrading machinery. The protein is ATP-dependent protease subunit HslV of Rhizobium rhizogenes (strain K84 / ATCC BAA-868) (Agrobacterium radiobacter).